The chain runs to 492 residues: Ketol-acid reductoisomerase (NADP(+)) (492 aa).

In terms of domain architecture, KARI N-terminal Rossmann spans 15 to 208 (AQLGKCRFMA…GAHRAGVLES (194 aa)). Residues 45 to 48 (CGAQ), Arg-68, Arg-76, Ser-78, and 108 to 110 (DKQ) contribute to the NADP(+) site. His-132 is an active-site residue. Gly-158 is an NADP(+) binding site. 2 KARI C-terminal knotted domains span residues 209–344 (SFVA…NSPE) and 345–485 (YDGK…MTDM). The Mg(2+) site is built by Asp-217, Glu-221, Glu-389, and Glu-393. Position 414 (Ser-414) interacts with substrate.

It belongs to the ketol-acid reductoisomerase family. Requires Mg(2+) as cofactor.

It catalyses the reaction (2R)-2,3-dihydroxy-3-methylbutanoate + NADP(+) = (2S)-2-acetolactate + NADPH + H(+). The enzyme catalyses (2R,3R)-2,3-dihydroxy-3-methylpentanoate + NADP(+) = (S)-2-ethyl-2-hydroxy-3-oxobutanoate + NADPH + H(+). The protein operates within amino-acid biosynthesis; L-isoleucine biosynthesis; L-isoleucine from 2-oxobutanoate: step 2/4. It functions in the pathway amino-acid biosynthesis; L-valine biosynthesis; L-valine from pyruvate: step 2/4. Functionally, involved in the biosynthesis of branched-chain amino acids (BCAA). Catalyzes an alkyl-migration followed by a ketol-acid reduction of (S)-2-acetolactate (S2AL) to yield (R)-2,3-dihydroxy-isovalerate. In the isomerase reaction, S2AL is rearranged via a Mg-dependent methyl migration to produce 3-hydroxy-3-methyl-2-ketobutyrate (HMKB). In the reductase reaction, this 2-ketoacid undergoes a metal-dependent reduction by NADPH to yield (R)-2,3-dihydroxy-isovalerate. The chain is Ketol-acid reductoisomerase (NADP(+)) from Photorhabdus laumondii subsp. laumondii (strain DSM 15139 / CIP 105565 / TT01) (Photorhabdus luminescens subsp. laumondii).